A 427-amino-acid polypeptide reads, in one-letter code: MNSSPDPLAALTATDPTIADLIRAEERRQSEKIRLIPSENYVSKAVLEATGTVLTNKYSEGYPNRRYYEGQQFIDQIETIAIERAKQLFGVDHANVQPYSGSPANLAIYLALLSPGDTVMGMALPMGGHLTHGWPVSATGIWFRSVQYGVRRDTGRIDFDEVREVARRERPKVIFAGGTAIPRIIDFAAFAEIAREVNAVLVADIAHISGLVAGGVHPSPVGHADIISTTTHKTLRGPRGAMLMSTEQYAKALDKAVFPGLQGGPHNHTTAAIAVALLEAMQPEFRDYARNIVANAAVLAEELLARGFDLVSGGTDNHLILVDLTSKGVAGKPVARALDRAGIELNYNTVPFDPRKPFDPSGIRLGTPAVTSRGMGPAEMRQIAAWIDEVTTAVAKGDEEALAAVEQRVAGEVRELTKNFPTPGLDR.

Residues Leu124 and 128 to 130 (GHL) each bind (6S)-5,6,7,8-tetrahydrofolate. Lys233 is modified (N6-(pyridoxal phosphate)lysine).

The protein belongs to the SHMT family. As to quaternary structure, homodimer. Requires pyridoxal 5'-phosphate as cofactor.

The protein resides in the cytoplasm. It catalyses the reaction (6R)-5,10-methylene-5,6,7,8-tetrahydrofolate + glycine + H2O = (6S)-5,6,7,8-tetrahydrofolate + L-serine. It participates in one-carbon metabolism; tetrahydrofolate interconversion. It functions in the pathway amino-acid biosynthesis; glycine biosynthesis; glycine from L-serine: step 1/1. In terms of biological role, catalyzes the reversible interconversion of serine and glycine with tetrahydrofolate (THF) serving as the one-carbon carrier. This reaction serves as the major source of one-carbon groups required for the biosynthesis of purines, thymidylate, methionine, and other important biomolecules. Also exhibits THF-independent aldolase activity toward beta-hydroxyamino acids, producing glycine and aldehydes, via a retro-aldol mechanism. The sequence is that of Serine hydroxymethyltransferase from Acidothermus cellulolyticus (strain ATCC 43068 / DSM 8971 / 11B).